A 343-amino-acid chain; its full sequence is MSAFTPASEVLLRHSDDFEQSRILFAGDLQDDLPARLDTAASRAHTQQFHHWQVLSRQMGDNARFSLVATANDVADCDTLIYYWPKNKPEAQFQLMNLLSLLPVGTDIFVVGENRSGVRIAEQMLADYAPLNKVDSARRCGLYFGRLEKQPVFDANKFWGEYSVDGLTVKTLPGVFSRDGLDVGSQLLLSTLTPHTKGKVLDVGCGAGVLSVAFARHSPKIRLTLCDVSAPAVEASRATLATNGVEGEVFASNVFSEVKGRFDMIISNPPFHDGMQTSLDAAQTLIRGAVRHLNSGGELRIVANAFLPYPDVLDETFGFHEVIAQTGRFKVYRAIMTRQAKKG.

It belongs to the methyltransferase superfamily. RsmC family. Monomer.

The protein resides in the cytoplasm. The catalysed reaction is guanosine(1207) in 16S rRNA + S-adenosyl-L-methionine = N(2)-methylguanosine(1207) in 16S rRNA + S-adenosyl-L-homocysteine + H(+). Its function is as follows. Specifically methylates the guanine in position 1207 of 16S rRNA in the 30S particle. The sequence is that of Ribosomal RNA small subunit methyltransferase C from Escherichia coli O1:K1 / APEC.